A 341-amino-acid polypeptide reads, in one-letter code: DNA-directed RNA polymerase subunit alpha (341 aa).

The tract at residues 1–233 (MIRDEIPISA…NLFIPFLHAE (233 aa)) is alpha N-terminal domain (alpha-NTD). An alpha C-terminal domain (alpha-CTD) region spans residues 265–341 (TKGVTFKHIF…NLPKNKLHFH (77 aa)).

This sequence belongs to the RNA polymerase alpha chain family. In terms of assembly, in plastids the minimal PEP RNA polymerase catalytic core is composed of four subunits: alpha, beta, beta', and beta''. When a (nuclear-encoded) sigma factor is associated with the core the holoenzyme is formed, which can initiate transcription.

It is found in the plastid. The protein localises to the chloroplast. The enzyme catalyses RNA(n) + a ribonucleoside 5'-triphosphate = RNA(n+1) + diphosphate. In terms of biological role, DNA-dependent RNA polymerase catalyzes the transcription of DNA into RNA using the four ribonucleoside triphosphates as substrates. The chain is DNA-directed RNA polymerase subunit alpha from Takakia lepidozioides (Moss).